Reading from the N-terminus, the 389-residue chain is Chalcone synthase (389 aa).

The active site involves Cys164.

It belongs to the thiolase-like superfamily. Chalcone/stilbene synthases family.

It catalyses the reaction (E)-4-coumaroyl-CoA + 3 malonyl-CoA + 3 H(+) = 2',4,4',6'-tetrahydroxychalcone + 3 CO2 + 4 CoA. It participates in secondary metabolite biosynthesis; flavonoid biosynthesis. In terms of biological role, the primary product of this enzyme is 4,2',4',6'-tetrahydroxychalcone (also termed naringenin-chalcone or chalcone) which can under specific conditions spontaneously isomerize into naringenin. This is Chalcone synthase (CHS) from Catharanthus roseus (Madagascar periwinkle).